Here is a 247-residue protein sequence, read N- to C-terminus: Adenosylcobinamide-GDP ribazoletransferase (247 aa).

Helical transmembrane passes span 34–54 (IVTF…VFVA), 59–79 (CGIP…TGGF), 113–133 (GGLA…ELAL), 138–158 (MLAA…LLMY), 171–193 (VFIG…ILAA), and 194–214 (ILMP…AIFI).

This sequence belongs to the CobS family. The cofactor is Mg(2+).

It localises to the cell inner membrane. The enzyme catalyses alpha-ribazole + adenosylcob(III)inamide-GDP = adenosylcob(III)alamin + GMP + H(+). The catalysed reaction is alpha-ribazole 5'-phosphate + adenosylcob(III)inamide-GDP = adenosylcob(III)alamin 5'-phosphate + GMP + H(+). Its pathway is cofactor biosynthesis; adenosylcobalamin biosynthesis; adenosylcobalamin from cob(II)yrinate a,c-diamide: step 7/7. Joins adenosylcobinamide-GDP and alpha-ribazole to generate adenosylcobalamin (Ado-cobalamin). Also synthesizes adenosylcobalamin 5'-phosphate from adenosylcobinamide-GDP and alpha-ribazole 5'-phosphate. The polypeptide is Adenosylcobinamide-GDP ribazoletransferase (Citrobacter koseri (strain ATCC BAA-895 / CDC 4225-83 / SGSC4696)).